The following is a 62-amino-acid chain: uncharacterized protein (62 aa).

The interval 1 to 26 (MGELAASANHGHSPCYPERKGTPGDL) is disordered. Over residues 17–26 (PERKGTPGDL) the composition is skewed to basic and acidic residues.

This is an uncharacterized protein from Homo sapiens (Human).